Consider the following 220-residue polypeptide: uncharacterized protein (220 aa).

Transmembrane regions (helical) follow at residues 61 to 81, 85 to 105, 115 to 135, and 150 to 170; these read LISVLTIPFYVAIIIFISFFG, SVMFSVIILGSVLISTCYGAF, FVIIQLVFLIYDLILITILLL, and LPLEDIPFGTDQVLLGCSLLL.

It localises to the membrane. This is an uncharacterized protein from Caenorhabditis elegans.